The primary structure comprises 355 residues: C-C chemokine receptor type 1 (355 aa).

The Extracellular segment spans residues 1–34; the sequence is MEISDFTEAYPTTTEFDYGDSTPCQKTAVRAFGA. A helical membrane pass occupies residues 35–60; the sequence is GLLPPLYSLVFIIGVVGNVLVILVLM. Topologically, residues 61 to 64 are cytoplasmic; sequence QHRR. Residues 65–91 form a helical membrane-spanning segment; that stretch reads LQSMTSIYLFNLAVSDLVFLFTLPFWI. Topologically, residues 92–107 are extracellular; sequence DYKLKDDWIFGDAMCK. Cysteines 106 and 183 form a disulfide. The chain crosses the membrane as a helical span at residues 108–129; sequence LLSGFYYLGLYSEIFFIILLTI. The Cytoplasmic portion of the chain corresponds to 130-146; it reads DRYLAIVHAVFALRART. A helical membrane pass occupies residues 147-171; it reads VTFGIITSIITWALAILASMPALYF. The Extracellular segment spans residues 172 to 197; it reads FKAQWEFTHRTCSPHFPYKSLKQWKR. The helical transmembrane segment at 198–223 threads the bilayer; sequence FQALKLNLLGLILPLLVMIICYAGII. Residues 224 to 239 lie on the Cytoplasmic side of the membrane; the sequence is RILLRRPSEKKVKAVR. The chain crosses the membrane as a helical span at residues 240 to 264; it reads LIFAITLLFFLLWTPYNLSVFVSAF. Residues 265–281 lie on the Extracellular side of the membrane; that stretch reads QDVLFTNQCEQSKQLDL. The chain crosses the membrane as a helical span at residues 282-305; it reads AMQVTEVIAYTHCCVNPIIYVFVG. Topologically, residues 306–355 are cytoplasmic; it reads ERFWKYLRQLFQRHVAIPLAKWLPFLSVDQLERTSSISPSTGEHELSAGF.

It belongs to the G-protein coupled receptor 1 family. Interacts with CREB3. Interacts with CCL3. Interacts with CCL15. Interacts with CCL23. Interacts with GNAI1. Interacts with PF4/CXCL4. As to expression, detected in the heart, spleen, lung, peritoneal exudate cells and leukocytes.

The protein resides in the cell membrane. In terms of biological role, chemokine receptor that plays a crucial role in regulating immune cell migration, inflammation, and immune responses. Contributes to the inflammatory response by recruiting immune cells, such as monocytes, macrophages, T-cells, and dendritic cells, to sites of inflammation for the clearance of pathogens and the resolution of tissue damage. When activated by its ligands including CCL3, CCL5-9, CCL13-16 and CCL23, triggers a signaling cascade within immune cells, leading to their migration towards the source of the chemokine. For example, mediates neutrophil migration after activation by CCL3 leading to the sequential release of TNF-alpha and leukotriene B4. Also mediates monocyte migration upon CXCL4 binding. Activation by CCL5 results in neuroinflammation through the ERK1/2 signaling pathway. The polypeptide is C-C chemokine receptor type 1 (Ccr1) (Mus musculus (Mouse)).